Reading from the N-terminus, the 92-residue chain is Muscle LIM protein 1 (92 aa).

One can recognise an LIM zinc-binding domain in the interval Cys-11 to Cys-62. The Nuclear localization signal signature appears at Arg-65–Lys-70.

In the embryo, expression is restricted to the somatic, visceral, and pharyngeal muscles. Within the somatic musculature, MLP60 is distributed throughout the muscle fibers. There is no expression in cardiac mesoderm or in fat body.

Its subcellular location is the cytoplasm. The protein localises to the nucleus. Functionally, positive regulator of myogenesis. In Drosophila melanogaster (Fruit fly), this protein is Muscle LIM protein 1 (Mlp60A).